The chain runs to 226 residues: Endonuclease V (226 aa).

Mg(2+)-binding residues include Asp-43 and Asp-108.

This sequence belongs to the endonuclease V family. It depends on Mg(2+) as a cofactor.

It is found in the cytoplasm. It catalyses the reaction Endonucleolytic cleavage at apurinic or apyrimidinic sites to products with a 5'-phosphate.. Its function is as follows. DNA repair enzyme involved in the repair of deaminated bases. Selectively cleaves double-stranded DNA at the second phosphodiester bond 3' to a deoxyinosine leaving behind the intact lesion on the nicked DNA. The protein is Endonuclease V of Thermosipho melanesiensis (strain DSM 12029 / CIP 104789 / BI429).